The chain runs to 419 residues: Gamma-glutamyl phosphate reductase (419 aa).

This sequence belongs to the gamma-glutamyl phosphate reductase family.

Its subcellular location is the cytoplasm. The enzyme catalyses L-glutamate 5-semialdehyde + phosphate + NADP(+) = L-glutamyl 5-phosphate + NADPH + H(+). Its pathway is amino-acid biosynthesis; L-proline biosynthesis; L-glutamate 5-semialdehyde from L-glutamate: step 2/2. In terms of biological role, catalyzes the NADPH-dependent reduction of L-glutamate 5-phosphate into L-glutamate 5-semialdehyde and phosphate. The product spontaneously undergoes cyclization to form 1-pyrroline-5-carboxylate. This is Gamma-glutamyl phosphate reductase from Azoarcus sp. (strain BH72).